Consider the following 224-residue polypeptide: UPF0758 protein VF_0126 (224 aa).

Residues 102–224 (ALTSPEHTKR…IVSFAERGWI (123 aa)) enclose the MPN domain. The Zn(2+) site is built by histidine 173, histidine 175, and aspartate 186. The short motif at 173–186 (HNHPSGVAEPSQAD) is the JAMM motif element.

It belongs to the UPF0758 family.

The sequence is that of UPF0758 protein VF_0126 from Aliivibrio fischeri (strain ATCC 700601 / ES114) (Vibrio fischeri).